Consider the following 160-residue polypeptide: MD-2-related lipid-recognition protein ROSY1 (160 aa).

The first 23 residues, 1–23, serve as a signal peptide directing secretion; the sequence is MAISHTQLLLLLLVSLFFSPALC.

As to quaternary structure, interacts with SYT1. In terms of tissue distribution, expressed exclusively in roots, in epidermis and cortex cells of the root elongation zone, and lateral root cap cells at the root tip.

It is found in the cytoplasm. Its function is as follows. Involved in the regulation of gravitropic response and basipetal auxin transport in roots. Involved in salt stress tolerance. May facilitate membrane trafficking and asymmetric cell elongation via SYT1. Binds stigmasterol and dipalmitoyl phosphoethanolamine (DPPE) in vitro. The protein is MD-2-related lipid-recognition protein ROSY1 of Arabidopsis thaliana (Mouse-ear cress).